Consider the following 105-residue polypeptide: Thiosulfate sulfurtransferase GlpE (105 aa).

Residues methionine 15–threonine 103 enclose the Rhodanese domain. The Cysteine persulfide intermediate role is filled by cysteine 63.

The protein belongs to the GlpE family.

The protein localises to the cytoplasm. The enzyme catalyses thiosulfate + hydrogen cyanide = thiocyanate + sulfite + 2 H(+). It carries out the reaction thiosulfate + [thioredoxin]-dithiol = [thioredoxin]-disulfide + hydrogen sulfide + sulfite + 2 H(+). Its function is as follows. Transferase that catalyzes the transfer of sulfur from thiosulfate to thiophilic acceptors such as cyanide or dithiols. May function in a CysM-independent thiosulfate assimilation pathway by catalyzing the conversion of thiosulfate to sulfite, which can then be used for L-cysteine biosynthesis. The polypeptide is Thiosulfate sulfurtransferase GlpE (Haemophilus influenzae (strain 86-028NP)).